An 82-amino-acid chain; its full sequence is Translational regulator CsrA (82 aa).

Belongs to the CsrA/RsmA family. Homodimer; the beta-strands of each monomer intercalate to form a hydrophobic core, while the alpha-helices form wings that extend away from the core.

It localises to the cytoplasm. Functionally, a translational regulator that binds mRNA to regulate translation initiation and/or mRNA stability. Usually binds in the 5'-UTR at or near the Shine-Dalgarno sequence preventing ribosome-binding, thus repressing translation. Its main target seems to be the major flagellin gene, while its function is anatagonized by FliW. This Geobacillus sp. (strain WCH70) protein is Translational regulator CsrA.